Here is a 595-residue protein sequence, read N- to C-terminus: Beta-(1--&gt;2)glucan export ATP-binding/permease protein NdvA (595 aa).

A run of 5 helical transmembrane segments spans residues F21 to L41, L56 to V76, I129 to P149, L158 to Q178, and I252 to V272. The ABC transmembrane type-1 domain occupies F21–S301. The 235-residue stretch at I335–A569 folds into the ABC transporter domain. G368–T375 contacts ATP.

It belongs to the ABC transporter superfamily. Beta-(1--&gt;2)glucan exporter (TC 3.A.1.108.1) family. As to quaternary structure, homodimer.

It is found in the cell inner membrane. The catalysed reaction is [(1-&gt;2)-beta-D-glucosyl](n)(in) + ATP + H2O = [(1-&gt;2)-beta-D-glucosyl](n)(out) + ADP + phosphate + H(+). In terms of biological role, involved in beta-(1--&gt;2)glucan export. Transmembrane domains (TMD) form a pore in the inner membrane and the ATP-binding domain (NBD) is responsible for energy generation. This chain is Beta-(1--&gt;2)glucan export ATP-binding/permease protein NdvA, found in Bartonella bacilliformis (strain ATCC 35685 / KC583 / Herrer 020/F12,63).